The following is a 416-amino-acid chain: ABSCISIC ACID-INSENSITIVE 5-like protein 5 (416 aa).

The disordered stretch occupies residues 1 to 23; it reads MDGSMNLGNEPPGDGGGGGGLTR. Residues 13–22 are compositionally biased toward gly residues; the sequence is GDGGGGGGLT. Residues Ser-26, Ser-45, and Ser-86 each carry the phosphoserine modification. Phosphothreonine is present on Thr-135. The tract at residues 300–326 is disordered; sequence SEGIGKSNGDSSSLSPSPYMFNGGVRG. Residues 336–399 enclose the bZIP domain; that stretch reads VERRQRRMIK…KNQETEMRNL (64 aa). The segment at 338-357 is basic motif; it reads RRQRRMIKNRESAARSRARK. Positions 364–385 are leucine-zipper; that stretch reads LEAEVAKLKEENDELQRKQARI. A disordered region spans residues 388-416; the sequence is MQKNQETEMRNLLQGGPKKKLRRTESGPW.

The protein belongs to the bZIP family. ABI5 subfamily. As to quaternary structure, DNA-binding heterodimer. Interacts with ARIA. The activation by phosphorylation is induced by abscisic acid (ABA). Phosphorylated by SRK2C, SRK2D, SRK2E, SRK2F and SRK2I in vitro. In terms of tissue distribution, expressed in roots, leaves, flowers and siliques but not in seeds.

It localises to the nucleus. Involved in ABA and stress responses and acts as a positive component of glucose signal transduction. Functions as a transcriptional activator in the ABA-inducible expression of rd29B. Binds specifically to the ABA-responsive element (ABRE) of the rd29B gene promoter. This Arabidopsis thaliana (Mouse-ear cress) protein is ABSCISIC ACID-INSENSITIVE 5-like protein 5 (ABF2).